The primary structure comprises 286 residues: Pyridoxal kinase PdxY (286 aa).

Substrate is bound by residues serine 9 and 44-45 (TQ). ATP is bound by residues aspartate 111, alanine 143, glutamate 148, lysine 181, and 208-211 (RPLV). Residue aspartate 223 coordinates substrate.

The protein belongs to the pyridoxine kinase family. PdxY subfamily. Homodimer. The cofactor is Mg(2+).

The enzyme catalyses pyridoxal + ATP = pyridoxal 5'-phosphate + ADP + H(+). It functions in the pathway cofactor metabolism; pyridoxal 5'-phosphate salvage; pyridoxal 5'-phosphate from pyridoxal: step 1/1. In terms of biological role, pyridoxal kinase involved in the salvage pathway of pyridoxal 5'-phosphate (PLP). Catalyzes the phosphorylation of pyridoxal to PLP. The protein is Pyridoxal kinase PdxY of Yersinia pseudotuberculosis serotype I (strain IP32953).